The primary structure comprises 328 residues: Tetraacyldisaccharide 4'-kinase (328 aa).

55–62 (TAGGNGKT) provides a ligand contact to ATP.

This sequence belongs to the LpxK family.

The enzyme catalyses a lipid A disaccharide + ATP = a lipid IVA + ADP + H(+). It functions in the pathway glycolipid biosynthesis; lipid IV(A) biosynthesis; lipid IV(A) from (3R)-3-hydroxytetradecanoyl-[acyl-carrier-protein] and UDP-N-acetyl-alpha-D-glucosamine: step 6/6. Its function is as follows. Transfers the gamma-phosphate of ATP to the 4'-position of a tetraacyldisaccharide 1-phosphate intermediate (termed DS-1-P) to form tetraacyldisaccharide 1,4'-bis-phosphate (lipid IVA). This Escherichia coli O45:K1 (strain S88 / ExPEC) protein is Tetraacyldisaccharide 4'-kinase.